A 450-amino-acid chain; its full sequence is Neutral protease 2 homolog AFUB_070680 (450 aa).

A signal peptide spans 1–19; that stretch reads MKITALASAILAVAQGALA. Residues 20-172 constitute a propeptide that is removed on maturation; that stretch reads LPARAPALDI…PASIKPLDRR (153 aa). 2 disulfide bridges follow: Cys179/Cys251 and Cys258/Cys276. His300 contacts Zn(2+). Glu301 is an active-site residue. His304 and Asp315 together coordinate Zn(2+). Polar residues predominate over residues 364–392; it reads QPGQTEPGTQTMWDGYSQPGQTEPGTQTM. A disordered region spans residues 364-416; that stretch reads QPGQTEPGTQTMWDGYSQPGQTEPGTQTMWDGYSQPGQTEPGTQTTWDGYSQP. Residues 398–409 are compositionally biased toward low complexity; sequence QPGQTEPGTQTT.

The protein belongs to the peptidase M35 family. The cofactor is Zn(2+).

It localises to the secreted. The catalysed reaction is Preferential cleavage of bonds with hydrophobic residues in P1'. Also 3-Asn-|-Gln-4 and 8-Gly-|-Ser-9 bonds in insulin B chain.. In terms of biological role, secreted metalloproteinase that allows assimilation of proteinaceous substrates. Shows high activities on basic nuclear substrates such as histone and protamine. May be involved in virulence. The chain is Neutral protease 2 homolog AFUB_070680 from Aspergillus fumigatus (strain ATCC MYA-4609 / CBS 101355 / FGSC A1100 / Af293) (Neosartorya fumigata).